The chain runs to 263 residues: Shikimate dehydrogenase (NADP(+)) (263 aa).

Residues S16–S18 and T65 contribute to the shikimate site. K69 (proton acceptor) is an active-site residue. Residues N90 and D105 each contribute to the shikimate site. Residues G125–S129, S181, and L208 contribute to the NADP(+) site. A shikimate-binding site is contributed by Y210. G230 contacts NADP(+). Shikimate is bound at residue Q237.

Belongs to the shikimate dehydrogenase family. As to quaternary structure, homodimer.

It catalyses the reaction shikimate + NADP(+) = 3-dehydroshikimate + NADPH + H(+). The protein operates within metabolic intermediate biosynthesis; chorismate biosynthesis; chorismate from D-erythrose 4-phosphate and phosphoenolpyruvate: step 4/7. Functionally, involved in the biosynthesis of the chorismate, which leads to the biosynthesis of aromatic amino acids. Catalyzes the reversible NADPH linked reduction of 3-dehydroshikimate (DHSA) to yield shikimate (SA). The protein is Shikimate dehydrogenase (NADP(+)) of Helicobacter pylori (strain ATCC 700392 / 26695) (Campylobacter pylori).